A 182-amino-acid chain; its full sequence is Transcription repressor OFP11 (182 aa).

Residues 62–94 (PLHRRHSSENPAGVFSTNRREEEEEDETTTSVS) form a disordered region. An OVATE domain is found at 104–169 (MKHIESPDPY…VSAFADTLLW (66 aa)).

In terms of tissue distribution, expressed in roots, rosette and cauline leaves, shoots, stems, flower buds and siliques.

It is found in the nucleus. Functionally, transcriptional repressor that may regulate multiple aspects of plant growth and development through the regulation of BEL1-LIKE (BLH) and KNOX TALE (KNAT) homeodomain transcription factors. This is Transcription repressor OFP11 (OFP11) from Arabidopsis thaliana (Mouse-ear cress).